Reading from the N-terminus, the 218-residue chain is Small ribosomal subunit protein uS3 (218 aa).

Positions 38 to 106 (LRNDLKKKLM…PVHLNIEEVK (69 aa)) constitute a KH type-2 domain.

This sequence belongs to the universal ribosomal protein uS3 family. As to quaternary structure, part of the 30S ribosomal subunit. Forms a tight complex with proteins S10 and S14.

Functionally, binds the lower part of the 30S subunit head. Binds mRNA in the 70S ribosome, positioning it for translation. The sequence is that of Small ribosomal subunit protein uS3 from Legionella pneumophila (strain Paris).